We begin with the raw amino-acid sequence, 138 residues long: Large ribosomal subunit protein bL19 (138 aa).

This sequence belongs to the bacterial ribosomal protein bL19 family.

This protein is located at the 30S-50S ribosomal subunit interface and may play a role in the structure and function of the aminoacyl-tRNA binding site. This is Large ribosomal subunit protein bL19 (rplS) from Rickettsia prowazekii (strain Madrid E).